Reading from the N-terminus, the 592-residue chain is Potassium-transporting ATPase potassium-binding subunit (592 aa).

Helical transmembrane passes span 7-27 (ILLG…GTYI), 60-80 (LKYA…VYAL), 132-152 (ALAV…IALI), 175-195 (LHVL…QGVI), 279-299 (LSNF…CFTF), 310-330 (WAVL…AMHF), 409-429 (GLYG…LMIG), 449-469 (IAIL…VMLA), 513-533 (VMLG…VLAI), and 556-576 (LFVT…YVPA).

This sequence belongs to the KdpA family. In terms of assembly, the system is composed of three essential subunits: KdpA, KdpB and KdpC.

The protein localises to the cell inner membrane. Its function is as follows. Part of the high-affinity ATP-driven potassium transport (or Kdp) system, which catalyzes the hydrolysis of ATP coupled with the electrogenic transport of potassium into the cytoplasm. This subunit binds the periplasmic potassium ions and delivers the ions to the membrane domain of KdpB through an intramembrane tunnel. The protein is Potassium-transporting ATPase potassium-binding subunit of Dechloromonas aromatica (strain RCB).